A 126-amino-acid polypeptide reads, in one-letter code: UPF0102 protein plu4003 (126 aa).

Belongs to the UPF0102 family.

The protein is UPF0102 protein plu4003 of Photorhabdus laumondii subsp. laumondii (strain DSM 15139 / CIP 105565 / TT01) (Photorhabdus luminescens subsp. laumondii).